The primary structure comprises 931 residues: Protein translocase subunit SecA (931 aa).

Residues Gln-87, 105–109 (GEGKT), and Asp-523 each bind ATP. Zn(2+) contacts are provided by Cys-915, Cys-917, Cys-926, and His-927.

It belongs to the SecA family. As to quaternary structure, monomer and homodimer. Part of the essential Sec protein translocation apparatus which comprises SecA, SecYEG and auxiliary proteins SecDF-YajC and YidC. The cofactor is Zn(2+).

Its subcellular location is the cell inner membrane. It is found in the cytoplasm. The enzyme catalyses ATP + H2O + cellular proteinSide 1 = ADP + phosphate + cellular proteinSide 2.. Part of the Sec protein translocase complex. Interacts with the SecYEG preprotein conducting channel. Has a central role in coupling the hydrolysis of ATP to the transfer of proteins into and across the cell membrane, serving both as a receptor for the preprotein-SecB complex and as an ATP-driven molecular motor driving the stepwise translocation of polypeptide chains across the membrane. The polypeptide is Protein translocase subunit SecA (Xanthobacter autotrophicus (strain ATCC BAA-1158 / Py2)).